A 386-amino-acid chain; its full sequence is 1-deoxy-D-xylulose 5-phosphate reductoisomerase (386 aa).

Residues threonine 13, glycine 14, serine 15, isoleucine 16, asparagine 40, and asparagine 122 each contribute to the NADPH site. 1-deoxy-D-xylulose 5-phosphate is bound at residue lysine 123. An NADPH-binding site is contributed by glutamate 124. Aspartate 148 lines the Mn(2+) pocket. 1-deoxy-D-xylulose 5-phosphate contacts are provided by serine 149, glutamate 150, serine 177, and histidine 201. Position 150 (glutamate 150) interacts with Mn(2+). Glycine 207 lines the NADPH pocket. The 1-deoxy-D-xylulose 5-phosphate site is built by serine 214, asparagine 219, lysine 220, and glutamate 223. Glutamate 223 is a binding site for Mn(2+).

The protein belongs to the DXR family. Mg(2+) serves as cofactor. The cofactor is Mn(2+).

It catalyses the reaction 2-C-methyl-D-erythritol 4-phosphate + NADP(+) = 1-deoxy-D-xylulose 5-phosphate + NADPH + H(+). It functions in the pathway isoprenoid biosynthesis; isopentenyl diphosphate biosynthesis via DXP pathway; isopentenyl diphosphate from 1-deoxy-D-xylulose 5-phosphate: step 1/6. In terms of biological role, catalyzes the NADPH-dependent rearrangement and reduction of 1-deoxy-D-xylulose-5-phosphate (DXP) to 2-C-methyl-D-erythritol 4-phosphate (MEP). The polypeptide is 1-deoxy-D-xylulose 5-phosphate reductoisomerase (Francisella tularensis subsp. holarctica (strain OSU18)).